Reading from the N-terminus, the 305-residue chain is tRNA dimethylallyltransferase (305 aa).

13-20 (GPTSSGKT) lines the ATP pocket. 15–20 (TSSGKT) provides a ligand contact to substrate. The interaction with substrate tRNA stretch occupies residues 39 to 42 (DSKQ).

This sequence belongs to the IPP transferase family. As to quaternary structure, monomer. The cofactor is Mg(2+).

It carries out the reaction adenosine(37) in tRNA + dimethylallyl diphosphate = N(6)-dimethylallyladenosine(37) in tRNA + diphosphate. Catalyzes the transfer of a dimethylallyl group onto the adenine at position 37 in tRNAs that read codons beginning with uridine, leading to the formation of N6-(dimethylallyl)adenosine (i(6)A). The protein is tRNA dimethylallyltransferase of Neorickettsia sennetsu (strain ATCC VR-367 / Miyayama) (Ehrlichia sennetsu).